The sequence spans 313 residues: Porphobilinogen deaminase (313 aa).

Cys-242 carries the post-translational modification S-(dipyrrolylmethanemethyl)cysteine.

This sequence belongs to the HMBS family. As to quaternary structure, monomer. Dipyrromethane is required as a cofactor.

The enzyme catalyses 4 porphobilinogen + H2O = hydroxymethylbilane + 4 NH4(+). It participates in porphyrin-containing compound metabolism; protoporphyrin-IX biosynthesis; coproporphyrinogen-III from 5-aminolevulinate: step 2/4. In terms of biological role, tetrapolymerization of the monopyrrole PBG into the hydroxymethylbilane pre-uroporphyrinogen in several discrete steps. The sequence is that of Porphobilinogen deaminase from Escherichia coli O45:K1 (strain S88 / ExPEC).